Reading from the N-terminus, the 200-residue chain is Dephospho-CoA kinase (200 aa).

The region spanning V4 to D200 is the DPCK domain. A12 to T17 is a binding site for ATP.

It belongs to the CoaE family.

The protein resides in the cytoplasm. The catalysed reaction is 3'-dephospho-CoA + ATP = ADP + CoA + H(+). Its pathway is cofactor biosynthesis; coenzyme A biosynthesis; CoA from (R)-pantothenate: step 5/5. In terms of biological role, catalyzes the phosphorylation of the 3'-hydroxyl group of dephosphocoenzyme A to form coenzyme A. This Bacillus cereus (strain ATCC 10987 / NRS 248) protein is Dephospho-CoA kinase.